We begin with the raw amino-acid sequence, 220 residues long: Deoxyribose-phosphate aldolase (220 aa).

D92 functions as the Proton donor/acceptor in the catalytic mechanism. The active-site Schiff-base intermediate with acetaldehyde is K155. Residue K184 is the Proton donor/acceptor of the active site.

This sequence belongs to the DeoC/FbaB aldolase family. DeoC type 1 subfamily.

It localises to the cytoplasm. The enzyme catalyses 2-deoxy-D-ribose 5-phosphate = D-glyceraldehyde 3-phosphate + acetaldehyde. It participates in carbohydrate degradation; 2-deoxy-D-ribose 1-phosphate degradation; D-glyceraldehyde 3-phosphate and acetaldehyde from 2-deoxy-alpha-D-ribose 1-phosphate: step 2/2. Functionally, catalyzes a reversible aldol reaction between acetaldehyde and D-glyceraldehyde 3-phosphate to generate 2-deoxy-D-ribose 5-phosphate. The polypeptide is Deoxyribose-phosphate aldolase (Symbiobacterium thermophilum (strain DSM 24528 / JCM 14929 / IAM 14863 / T)).